The chain runs to 347 residues: MPFAQIVIGPPGSGKSTYCNGCSQFFNAIGRHSQVVNMDPANDALPYPCAVDIRDFITLEEIMQEQQLGPNGGLMYAVESLDNSIDLFILQIKSLVEEEKAYLVFDCPGQVELFTHHSSLFNIFKKMEKELDIRFCVVNLIDCFYMTSPSQYISILLLALRSMLMMDLPHINVFSKIDMLKSYGELPFRLDYYTEVQDLDYLEPYIEKEGSSVLGKKYSKLTETIKELVSDFNLVSFEVLSVDDKESMINLQGVIDKANGYIFGASEVGGDTVWAEASREGALIANYDIQDRWIDNKEKYDKEEEEKRTALLKEQELQNKAVDVNEEDEWENALKEWEEKQGMDFVR.

Residue 12-17 (GSGKST) coordinates GTP. The Gly-Pro-Asn (GPN)-loop; involved in dimer interface signature appears at 69–71 (GPN). 175–178 (SKID) contributes to the GTP binding site.

This sequence belongs to the GPN-loop GTPase family. As to quaternary structure, heterodimers with NPA3/GPN1 or GPN3. Binds to RNA polymerase II (RNAPII).

It is found in the cytoplasm. Functionally, small GTPase required for proper localization of RNA polymerase II and III (RNAPII and RNAPIII). May act at an RNAP assembly step prior to nuclear import. Required for establishment of sister chromatid cohesion. The chain is GPN-loop GTPase 2 from Saccharomyces cerevisiae (strain ATCC 204508 / S288c) (Baker's yeast).